The sequence spans 266 residues: Outer kinetochore KNL1 complex subunit ZWINT (266 aa).

Residues 95–115 are disordered; that stretch reads DQNPDALASEDTSRQKATETK. The span at 105-115 shows a compositional bias: basic and acidic residues; that stretch reads DTSRQKATETK. Residues 136–237 adopt a coiled-coil conformation; that stretch reads LSEALPQVKE…QRNQSYLQLL (102 aa). Phosphoserine occurs at positions 232 and 265.

Component of the KNL1 complex composed of KNL1 and ZWINT. Part of the ten-subunit outer kinetochore KMN network that includes the KNL1, MIS12 and NDC80 complexes; a bioriented kinetochore contains approximately 150 copies of the network. Interacts with the MIS12 complex subunits MIS12 DSN1, and PMF1. Interacts with the NDC80 complex subunit NDC80 during mitosis. Interacts with ZW10. Interacts with CETN3. Expressed abundantly in brain and at lower levels in testis and kidney.

The protein resides in the nucleus. Its subcellular location is the chromosome. The protein localises to the centromere. It is found in the kinetochore. Its function is as follows. Acts as a component of the outer kinetochore KNL1 complex that serves as a docking point for spindle assembly checkpoint components and mediates microtubule-kinetochore interactions. Kinetochores, consisting of a centromere-associated inner segment and a microtubule-contacting outer segment, play a crucial role in chromosome segregation by mediating the physical connection between centromeric DNA and spindle microtubules. The outer kinetochore is made up of the ten-subunit KMN network, comprising the MIS12, NDC80 and KNL1 complexes, and auxiliary microtubule-associated components; together they connect the outer kinetochore with the inner kinetochore, bind microtubules, and mediate interactions with mitotic checkpoint proteins that delay anaphase until chromosomes are bioriented on the spindle. Targets the RZZ complex to the kinetochore at prometaphase. Recruits MAD2L1 to the kinetochore, but is not required for BUB1B localization. In addition to orienting mitotic chromosomes, it is also essential for alignment of homologous chromosomes during meiotic metaphase I. In meiosis I, required to activate the spindle assembly checkpoint at unattached kinetochores to correct erroneous kinetochore-microtubule attachments. In Rattus norvegicus (Rat), this protein is Outer kinetochore KNL1 complex subunit ZWINT (Zwint).